The following is a 629-amino-acid chain: Acetylcholinesterase (629 aa).

The signal sequence occupies residues 1–38; sequence MGQLSILCLFVTVCASVCGYSWPSDETTTKPSQFKDFH. Cysteine 103 and cysteine 130 are joined by a disulfide. Residue asparagine 125 is glycosylated (N-linked (GlcNAc...) asparagine). Serine 253 acts as the Acyl-ester intermediate in catalysis. Residues cysteine 307 and cysteine 322 are joined by a disulfide bond. An N-linked (GlcNAc...) asparagine glycan is attached at asparagine 308. The active-site Charge relay system is glutamate 382. Residue asparagine 418 is glycosylated (N-linked (GlcNAc...) asparagine). A disulfide bridge links cysteine 458 with cysteine 574. Catalysis depends on histidine 496, which acts as the Charge relay system. Asparagine 509 carries N-linked (GlcNAc...) asparagine glycosylation. Residue serine 605 is the site of GPI-anchor amidated serine attachment. Positions 606–629 are cleaved as a propeptide — removed in mature form; it reads SSNELLPPSTSLVLIWIMTLLNAL.

This sequence belongs to the type-B carboxylesterase/lipase family. As to quaternary structure, homodimer; disulfide-linked. In terms of processing, the N-terminus is blocked.

The protein resides in the synapse. It localises to the cell membrane. The enzyme catalyses acetylcholine + H2O = choline + acetate + H(+). Its function is as follows. Rapidly hydrolyzes choline released into the synapse. In Leptinotarsa decemlineata (Colorado potato beetle), this protein is Acetylcholinesterase.